The sequence spans 452 residues: Tryptophan biosynthesis protein TrpCF (452 aa).

Residues 1–253 (MPSVLENILK…KACIKLILGE (253 aa)) are indole-3-glycerol phosphate synthase. The N-(5'-phosphoribosyl)anthranilate isomerase stretch occupies residues 254 to 448 (NKVCGLTRIK…KDKIKRLARI (195 aa)).

In the N-terminal section; belongs to the TrpC family. The protein in the C-terminal section; belongs to the TrpF family.

It carries out the reaction N-(5-phospho-beta-D-ribosyl)anthranilate = 1-(2-carboxyphenylamino)-1-deoxy-D-ribulose 5-phosphate. The enzyme catalyses 1-(2-carboxyphenylamino)-1-deoxy-D-ribulose 5-phosphate + H(+) = (1S,2R)-1-C-(indol-3-yl)glycerol 3-phosphate + CO2 + H2O. It participates in amino-acid biosynthesis; L-tryptophan biosynthesis; L-tryptophan from chorismate: step 3/5. Its pathway is amino-acid biosynthesis; L-tryptophan biosynthesis; L-tryptophan from chorismate: step 4/5. Functionally, bifunctional enzyme that catalyzes two sequential steps of tryptophan biosynthetic pathway. The first reaction is catalyzed by the isomerase, coded by the TrpF domain; the second reaction is catalyzed by the synthase, coded by the TrpC domain. This chain is Tryptophan biosynthesis protein TrpCF (trpC), found in Helicobacter pylori (strain ATCC 700392 / 26695) (Campylobacter pylori).